The chain runs to 157 residues: 2-C-methyl-D-erythritol 2,4-cyclodiphosphate synthase (157 aa).

The a divalent metal cation site is built by Asp-8 and His-10. 4-CDP-2-C-methyl-D-erythritol 2-phosphate is bound by residues 8 to 10 (DVH) and 34 to 35 (HS). Position 42 (His-42) interacts with a divalent metal cation. 4-CDP-2-C-methyl-D-erythritol 2-phosphate-binding positions include 56–58 (DIG), 132–135 (TTNE), and Arg-142.

This sequence belongs to the IspF family. In terms of assembly, homotrimer. It depends on a divalent metal cation as a cofactor.

It carries out the reaction 4-CDP-2-C-methyl-D-erythritol 2-phosphate = 2-C-methyl-D-erythritol 2,4-cyclic diphosphate + CMP. Its pathway is isoprenoid biosynthesis; isopentenyl diphosphate biosynthesis via DXP pathway; isopentenyl diphosphate from 1-deoxy-D-xylulose 5-phosphate: step 4/6. Its function is as follows. Involved in the biosynthesis of isopentenyl diphosphate (IPP) and dimethylallyl diphosphate (DMAPP), two major building blocks of isoprenoid compounds. Catalyzes the conversion of 4-diphosphocytidyl-2-C-methyl-D-erythritol 2-phosphate (CDP-ME2P) to 2-C-methyl-D-erythritol 2,4-cyclodiphosphate (ME-CPP) with a corresponding release of cytidine 5-monophosphate (CMP). This is 2-C-methyl-D-erythritol 2,4-cyclodiphosphate synthase from Pelodictyon phaeoclathratiforme (strain DSM 5477 / BU-1).